We begin with the raw amino-acid sequence, 1100 residues long: Exportin-T (1100 aa).

It belongs to the exportin family. As to quaternary structure, interacts with CEX1, GSP1, GSP2, NSP1, NUP2 and UTP8.

Its subcellular location is the nucleus. It is found in the cytoplasm. TRNA nucleus export receptor which facilitates tRNA translocation across the nuclear pore complex. Preferentially interacts with tRNAs with mature 5'- and 3'-termini and does not distinguish between intron-containing and spliced tRNAs. In the nucleus binds to tRNA and to the Ran-GTPases GSP1 or GSP2 in their active GTP-bound form. Docking of this trimeric complex to the nuclear pore complex (NPC) is mediated through binding to nucleoporins. Upon transit of a nuclear export complex into the cytoplasm, disassembling of the complex and hydrolysis of Ran-GTP to Ran-GDP cause release of the tRNA from the export receptor. The directionality of nuclear export is thought to be conferred by an asymmetric distribution of the GTP- and GDP-bound forms of Ran between the cytoplasm and nucleus. This chain is Exportin-T (LOS1), found in Saccharomyces cerevisiae (strain ATCC 204508 / S288c) (Baker's yeast).